A 371-amino-acid chain; its full sequence is N-acetyldiaminopimelate deacetylase (371 aa).

Aspartate 68 is a catalytic residue. Catalysis depends on glutamate 127, which acts as the Proton acceptor.

The protein belongs to the peptidase M20A family. N-acetyldiaminopimelate deacetylase subfamily.

It carries out the reaction N-acetyl-(2S,6S)-2,6-diaminopimelate + H2O = (2S,6S)-2,6-diaminopimelate + acetate. The protein operates within amino-acid biosynthesis; L-lysine biosynthesis via DAP pathway; LL-2,6-diaminopimelate from (S)-tetrahydrodipicolinate (acetylase route): step 3/3. Catalyzes the conversion of N-acetyl-diaminopimelate to diaminopimelate and acetate. The polypeptide is N-acetyldiaminopimelate deacetylase (Halalkalibacterium halodurans (strain ATCC BAA-125 / DSM 18197 / FERM 7344 / JCM 9153 / C-125) (Bacillus halodurans)).